The chain runs to 408 residues: 3-ketoacyl-CoA thiolase A, peroxisomal (408 aa).

Cysteine 112 functions as the Acyl-thioester intermediate in the catalytic mechanism. Residues histidine 366 and cysteine 394 each act as proton acceptor in the active site.

This sequence belongs to the thiolase-like superfamily. Thiolase family. As to quaternary structure, homodimer.

Its subcellular location is the peroxisome. It catalyses the reaction an acyl-CoA + acetyl-CoA = a 3-oxoacyl-CoA + CoA. It functions in the pathway lipid metabolism; fatty acid metabolism. This is 3-ketoacyl-CoA thiolase A, peroxisomal from Candida tropicalis (Yeast).